Reading from the N-terminus, the 136-residue chain is TBK1 inhibitor DP96R (136 aa).

The interval 66-86 (NNALEKPAGANNIPEKSAGRM) is disordered.

The protein belongs to the asfivirus DP96R family.

In terms of biological role, inhibits cGAS-STING-mediated type I IFN expression and NF-kB activation by inhibiting TBK1 and IKBKB/IKKB. Inhibits host TBK1 phosphorylation. This is TBK1 inhibitor DP96R from Ornithodoros (relapsing fever ticks).